The sequence spans 371 residues: Peptide chain release factor 2 (371 aa).

Residue Q253 is modified to N5-methylglutamine.

It belongs to the prokaryotic/mitochondrial release factor family. Methylated by PrmC. Methylation increases the termination efficiency of RF2.

Its subcellular location is the cytoplasm. Its function is as follows. Peptide chain release factor 2 directs the termination of translation in response to the peptide chain termination codons UGA and UAA. This chain is Peptide chain release factor 2, found in Mycobacterium marinum (strain ATCC BAA-535 / M).